The chain runs to 214 residues: tRNA (guanine-N(7)-)-methyltransferase (214 aa).

Residues Glu45, Asp70, Asn97, and Asn119 each coordinate S-adenosyl-L-methionine. Lys123 is a binding site for substrate. The segment at 125 to 130 (RHNKRR) is interaction with RNA. Substrate is bound by residues Asp155 and 193 to 196 (TEYE).

The protein belongs to the class I-like SAM-binding methyltransferase superfamily. TrmB family.

It catalyses the reaction guanosine(46) in tRNA + S-adenosyl-L-methionine = N(7)-methylguanosine(46) in tRNA + S-adenosyl-L-homocysteine. The protein operates within tRNA modification; N(7)-methylguanine-tRNA biosynthesis. Functionally, catalyzes the formation of N(7)-methylguanine at position 46 (m7G46) in tRNA. The sequence is that of tRNA (guanine-N(7)-)-methyltransferase from Clostridium novyi (strain NT).